Consider the following 235-residue polypeptide: Large ribosomal subunit protein uL1 (235 aa).

Belongs to the universal ribosomal protein uL1 family. As to quaternary structure, part of the 50S ribosomal subunit.

Binds directly to 23S rRNA. The L1 stalk is quite mobile in the ribosome, and is involved in E site tRNA release. In terms of biological role, protein L1 is also a translational repressor protein, it controls the translation of the L11 operon by binding to its mRNA. This is Large ribosomal subunit protein uL1 from Desulfovibrio desulfuricans (strain ATCC 27774 / DSM 6949 / MB).